The following is a 293-amino-acid chain: Bifunctional monothiol glutaredoxin-S16, chloroplastic (293 aa).

The N-terminal 62 residues, 1–62 (MAAITISSSL…APSRRRSFFI (62 aa)), are a transit peptide targeting the chloroplast. C123 and C219 are oxidised to a cystine. One can recognise a Glutaredoxin domain in the interval 194-293 (EELIDRLVKE…ENGELANILN (100 aa)). Residue K211 participates in glutathione binding. C219 lines the [2Fe-2S] cluster pocket. Residues R251, F263, and 276 to 277 (CD) contribute to the glutathione site.

This sequence belongs to the glutaredoxin family. CGFS subfamily. [2Fe-2S]-bridged holo-homodimer. Interacts in vitro with SUFE1, BOLA1, BOLA2 and BOLA4. Interacts in vivo only with SUFE1, BOLA1 and BOLA4. Interacts with SBP1.

The protein localises to the plastid. The protein resides in the chloroplast. With respect to regulation, the formation of an intramolecular disulfide bond negatively regulates both the N-terminal endonuclease and the C-terminal glutaredoxin activities. Its function is as follows. May only reduce GSH-thiol disulfides, but not protein disulfides. Participates probably to the maturation of iron-sulfur proteins and to the regulation of the redox state of the BOLA proteins. The GRXS16-BOLA1 heterodimer binds a labile, oxygen sensitive iron-sulfur cluster. Able to cleave linearized DNA in vitro. The protein is Bifunctional monothiol glutaredoxin-S16, chloroplastic of Arabidopsis thaliana (Mouse-ear cress).